The primary structure comprises 75 residues: Large ribosomal subunit protein bL31 (75 aa).

The protein belongs to the bacterial ribosomal protein bL31 family. Type A subfamily. As to quaternary structure, part of the 50S ribosomal subunit.

Its function is as follows. Binds the 23S rRNA. In Gluconobacter oxydans (strain 621H) (Gluconobacter suboxydans), this protein is Large ribosomal subunit protein bL31.